A 465-amino-acid chain; its full sequence is Cysteine--tRNA ligase (465 aa).

Zn(2+) is bound at residue Cys-29. A 'HIGH' region motif is present at residues 31–41 (PTVYNYIHIGN). Cys-209, His-234, and Glu-238 together coordinate Zn(2+). Residues 266–270 (KMSKS) carry the 'KMSKS' region motif. Lys-269 serves as a coordination point for ATP. Position 270 is a phosphoserine (Ser-270).

This sequence belongs to the class-I aminoacyl-tRNA synthetase family. In terms of assembly, monomer. Zn(2+) is required as a cofactor.

Its subcellular location is the cytoplasm. It catalyses the reaction tRNA(Cys) + L-cysteine + ATP = L-cysteinyl-tRNA(Cys) + AMP + diphosphate. The sequence is that of Cysteine--tRNA ligase from Bacillus cereus (strain B4264).